Consider the following 228-residue polypeptide: Sodium channel regulatory subunit beta-4 (228 aa).

The first 30 residues, 1 to 30 (MPGARDQGAARARWLGIGLLGLFLLPVSLS), serve as a signal peptide directing secretion. In terms of domain architecture, Ig-like C2-type spans 31–148 (LEVSVGKATT…NDFQHQATIF (118 aa)). At 31–162 (LEVSVGKATT…DKLEEVDNTV (132 aa)) the chain is on the extracellular side. 3 N-linked (GlcNAc...) asparagine glycosylation sites follow: Asn45, Asn71, and Asn113. Residues Cys53 and Cys131 are joined by a disulfide bond. The chain crosses the membrane as a helical span at residues 163–183 (TLIILGVVGGVIGLLIFILLV). Over 184 to 228 (KKFIAFIIKKTQEKKKECLVSSSGNDNTENGLPGSKAEEKAPTKV) the chain is Cytoplasmic. The tract at residues 198–228 (KKECLVSSSGNDNTENGLPGSKAEEKAPTKV) is disordered. The span at 203-213 (VSSSGNDNTEN) shows a compositional bias: polar residues. Residues 219 to 228 (KAEEKAPTKV) show a composition bias toward basic and acidic residues.

It belongs to the sodium channel auxiliary subunit SCN4B (TC 8.A.17) family. A voltage-gated sodium (Nav) channel consists of an ion-conducting pore-forming alpha subunit functional on its own that is regulated by one or more beta subunits. The beta subunit SCN4B is disulfide-linked to the pore-forming alpha subunit. Interacts with SCN1A; regulatory subunit of SCN1A/Nav1.1. Interacts with SCN2A; regulatory subunit of SCN2A/Nav1.2. Post-translationally, contains an interchain disulfide bond with SCN2A.

It is found in the cell membrane. In terms of biological role, regulatory subunit of multiple voltage-gated sodium (Nav) channels directly mediating the depolarization of excitable membranes. Navs, also called VGSCs (voltage-gated sodium channels) or VDSCs (voltage-dependent sodium channels), operate by switching between closed and open conformations depending on the voltage difference across the membrane. In the open conformation they allow Na(+) ions to selectively pass through the pore, along their electrochemical gradient. The influx of Na+ ions provokes membrane depolarization, initiating the propagation of electrical signals throughout cells and tissues. The accessory beta subunits participate in localization and functional modulation of the Nav channels. Modulates the activity of SCN1A/Nav1.1. Modulates the activity of SCN2A/Nav1.2. This is Sodium channel regulatory subunit beta-4 from Bos taurus (Bovine).